A 444-amino-acid polypeptide reads, in one-letter code: UPF0761 membrane protein RC1_0578 (444 aa).

6 helical membrane-spanning segments follow: residues 49–69 (LLAL…FPAY), 103–123 (AAAL…LLFF), 145–165 (LLSF…SLSV), 186–206 (FMLP…MIPN), 219–239 (IAAA…IAAF), and 248–268 (ALSV…VVLF). A disordered region spans residues 423-444 (SGQPSGQVETAVRQRTGLQGRI).

The protein belongs to the UPF0761 family.

The protein localises to the cell inner membrane. The chain is UPF0761 membrane protein RC1_0578 from Rhodospirillum centenum (strain ATCC 51521 / SW).